The chain runs to 158 residues: 3-hydroxyacyl-[acyl-carrier-protein] dehydratase FabZ (158 aa).

The active site involves histidine 62.

This sequence belongs to the thioester dehydratase family. FabZ subfamily.

It localises to the cytoplasm. It carries out the reaction a (3R)-hydroxyacyl-[ACP] = a (2E)-enoyl-[ACP] + H2O. Functionally, involved in unsaturated fatty acids biosynthesis. Catalyzes the dehydration of short chain beta-hydroxyacyl-ACPs and long chain saturated and unsaturated beta-hydroxyacyl-ACPs. This Novosphingobium aromaticivorans (strain ATCC 700278 / DSM 12444 / CCUG 56034 / CIP 105152 / NBRC 16084 / F199) protein is 3-hydroxyacyl-[acyl-carrier-protein] dehydratase FabZ.